The sequence spans 273 residues: IMGHMVNAIEQVDEFLNLGANAIEFDIDFDKDGIAQITHHGIPCDCGRKCTKKAIFTEYLDNIRQVTTPDDPKFREQLVLLALDLKLQRISSAKAYRAGEDVAKKLLDHYWRRGNSKARAYILLNIPLVEDYEFIRAFKDTLKNEGYESYNDKVGINFTGNEDLDKIRDVLEILGIHKQVWQADGITSCFARGTERLKEALKKRDTPGYNYIDKVYAWTLVRKSIMRRSLRLGVDGVMSNNPDRVIKVLKEKEFADKFRLATYNDNPWEKFRG.

His-4 is an active-site residue. Mg(2+)-binding residues include Glu-24 and Asp-26. His-40 functions as the Nucleophile in the catalytic mechanism. 2 disulfide bridges follow: Cys-44–Cys-50 and Cys-46–Cys-189. Residue Asp-84 coordinates Mg(2+).

Belongs to the arthropod phospholipase D family. Class II subfamily. It depends on Mg(2+) as a cofactor. As to expression, expressed by the venom gland.

The protein localises to the secreted. It carries out the reaction an N-(acyl)-sphingosylphosphocholine = an N-(acyl)-sphingosyl-1,3-cyclic phosphate + choline. The enzyme catalyses an N-(acyl)-sphingosylphosphoethanolamine = an N-(acyl)-sphingosyl-1,3-cyclic phosphate + ethanolamine. The catalysed reaction is a 1-acyl-sn-glycero-3-phosphocholine = a 1-acyl-sn-glycero-2,3-cyclic phosphate + choline. It catalyses the reaction a 1-acyl-sn-glycero-3-phosphoethanolamine = a 1-acyl-sn-glycero-2,3-cyclic phosphate + ethanolamine. In terms of biological role, dermonecrotic toxins cleave the phosphodiester linkage between the phosphate and headgroup of certain phospholipids (sphingolipid and lysolipid substrates), forming an alcohol (often choline) and a cyclic phosphate. This toxin acts on sphingomyelin (SM). It may also act on ceramide phosphoethanolamine (CPE), lysophosphatidylcholine (LPC) and lysophosphatidylethanolamine (LPE), but not on lysophosphatidylserine (LPS), and lysophosphatidylglycerol (LPG). It acts by transphosphatidylation, releasing exclusively cyclic phosphate products as second products. Induces dermonecrosis, hemolysis, increased vascular permeability, edema, inflammatory response, and platelet aggregation. This chain is Dermonecrotic toxin SdSicTox-betaIIB1aiii, found in Sicarius cf. damarensis (strain GJB-2008) (Six-eyed sand spider).